The sequence spans 74 residues: Exodeoxyribonuclease 7 small subunit (74 aa).

This sequence belongs to the XseB family. As to quaternary structure, heterooligomer composed of large and small subunits.

It is found in the cytoplasm. The catalysed reaction is Exonucleolytic cleavage in either 5'- to 3'- or 3'- to 5'-direction to yield nucleoside 5'-phosphates.. Functionally, bidirectionally degrades single-stranded DNA into large acid-insoluble oligonucleotides, which are then degraded further into small acid-soluble oligonucleotides. This Neisseria meningitidis serogroup A / serotype 4A (strain DSM 15465 / Z2491) protein is Exodeoxyribonuclease 7 small subunit.